The sequence spans 35 residues: Pheromone-binding protein 2 (35 aa).

It belongs to the PBP/GOBP family. In terms of assembly, homodimer. Antenna.

This major soluble protein in olfactory sensilla of male moths might serve to solubilize the extremely hydrophobic pheromone molecules and to transport pheromone through the aqueous lymph to receptors located on olfactory cilia. The sequence is that of Pheromone-binding protein 2 from Lymantria dispar (Gypsy moth).